We begin with the raw amino-acid sequence, 338 residues long: Uroporphyrinogen decarboxylase (338 aa).

Substrate is bound by residues 21-25 (RQAGR), Asp71, Tyr146, Ser201, and His316.

The protein belongs to the uroporphyrinogen decarboxylase family. In terms of assembly, homodimer.

It localises to the cytoplasm. It catalyses the reaction uroporphyrinogen III + 4 H(+) = coproporphyrinogen III + 4 CO2. Its pathway is porphyrin-containing compound metabolism; protoporphyrin-IX biosynthesis; coproporphyrinogen-III from 5-aminolevulinate: step 4/4. Functionally, catalyzes the decarboxylation of four acetate groups of uroporphyrinogen-III to yield coproporphyrinogen-III. This Rickettsia akari (strain Hartford) protein is Uroporphyrinogen decarboxylase.